The following is a 470-amino-acid chain: Glutamate--tRNA ligase (470 aa).

Positions 9–19 match the 'HIGH' region motif; it reads PSPTGYLHVGG. Positions 236–240 match the 'KMSKS' region motif; the sequence is RLSKR. K239 provides a ligand contact to ATP.

The protein belongs to the class-I aminoacyl-tRNA synthetase family. Glutamate--tRNA ligase type 1 subfamily. Monomer.

The protein localises to the cytoplasm. The catalysed reaction is tRNA(Glu) + L-glutamate + ATP = L-glutamyl-tRNA(Glu) + AMP + diphosphate. Functionally, catalyzes the attachment of glutamate to tRNA(Glu) in a two-step reaction: glutamate is first activated by ATP to form Glu-AMP and then transferred to the acceptor end of tRNA(Glu). The polypeptide is Glutamate--tRNA ligase (Colwellia psychrerythraea (strain 34H / ATCC BAA-681) (Vibrio psychroerythus)).